Here is a 337-residue protein sequence, read N- to C-terminus: MTIQCSVCRNHVQSMYCAHCINTSPNLLHPLRMQLLMVQQKNKVLKGKVEDILSHALDKNWKSSDNDTEGIILADRLHKLEVLKRTKRNNRVRYRISQLTKRIENKQQRLQSLRLQITTTDVAKVSNANKKEIEEIRTKYLQLNEVVKREQELECQSLVDWFILRKRNSYEIPYTLVFLPVVSLKNFHKLPKAVTISSLHKMFQFLEIYSQIISFPLLYKGDEIKEKTINTDEEIAKLITKLVINVLQIGRFKNLIPKDAIDLVWLLDQYDVDSLFYNVIVNHKMECRVVLFHWTFGKVSKVVTETLQLPAGSTTSFPRQQVGDTYDKDDDMWHIVG.

Residues cysteine 5–cysteine 20 are cysteine repeats. Residues lysine 87 to leucine 153 are a coiled coil.

This sequence belongs to the ATG14 family.

The protein resides in the preautophagosomal structure membrane. Its subcellular location is the vacuole membrane. In terms of biological role, required for cytoplasm to vacuole transport (Cvt) and autophagy as a part of the autophagy-specific VPS34 PI3-kinase complex I. This complex is essential to recruit the ATG8-phosphatidylinositol conjugate and the ATG12-ATG5 conjugate to the pre-autophagosomal structure. ATG14 mediates the specific binding of the VPS34 PI3-kinase complex I to the preautophagosomal structure (PAS). This chain is Autophagy-related protein 14 (ATG14), found in Vanderwaltozyma polyspora (strain ATCC 22028 / DSM 70294 / BCRC 21397 / CBS 2163 / NBRC 10782 / NRRL Y-8283 / UCD 57-17) (Kluyveromyces polysporus).